Here is a 245-residue protein sequence, read N- to C-terminus: tRNA pseudouridine synthase A (245 aa).

The active-site Nucleophile is the Asp-52. Tyr-111 provides a ligand contact to substrate.

This sequence belongs to the tRNA pseudouridine synthase TruA family. As to quaternary structure, homodimer.

It carries out the reaction uridine(38/39/40) in tRNA = pseudouridine(38/39/40) in tRNA. Its function is as follows. Formation of pseudouridine at positions 38, 39 and 40 in the anticodon stem and loop of transfer RNAs. This chain is tRNA pseudouridine synthase A, found in Bradyrhizobium diazoefficiens (strain JCM 10833 / BCRC 13528 / IAM 13628 / NBRC 14792 / USDA 110).